Consider the following 789-residue polypeptide: Glycerol-3-phosphate acyltransferase (789 aa).

The short motif at 275-280 (SHRSYI) is the HXXXXD motif element.

The protein belongs to the GPAT/DAPAT family.

Its subcellular location is the cell membrane. The catalysed reaction is sn-glycerol 3-phosphate + an acyl-CoA = a 1-acyl-sn-glycero-3-phosphate + CoA. It functions in the pathway phospholipid metabolism; CDP-diacylglycerol biosynthesis; CDP-diacylglycerol from sn-glycerol 3-phosphate: step 1/3. This chain is Glycerol-3-phosphate acyltransferase, found in Mycobacterium tuberculosis (strain ATCC 25177 / H37Ra).